Here is a 331-residue protein sequence, read N- to C-terminus: MHNHNNRLVITPGEPAGVGPDLAITLAQQDWPVELVVCADPALLLARASQLNLPLQLREYQADQPAIAQQAGSLTILPVKTAVNVVPGKLDVGNSHYVVETLAKACDGAISGEFAALVTGPVQKSIINDAGIPFIGHTEFFADRSHCQRVVMMLATEELRVALATTHLPLLAVPGAITQASLHEVITILDNDLKTKFGITQPQIYVCGLNPHAGEGGHMGHEEIDTIIPALNTLRQQGINLIGPLPADTLFQPKYLQHADAVLAMYHDQGLPVLKYQGFGRAVNITLGLPFIRTSVDHGTALELAATGTADVGSFITALNLAIKMINNSNE.

Substrate is bound by residues H137 and T138. The a divalent metal cation site is built by H167, H212, and H267. 3 residues coordinate substrate: K275, N284, and R293.

Belongs to the PdxA family. As to quaternary structure, homodimer. Zn(2+) is required as a cofactor. The cofactor is Mg(2+). Co(2+) serves as cofactor.

Its subcellular location is the cytoplasm. It carries out the reaction 4-(phosphooxy)-L-threonine + NAD(+) = 3-amino-2-oxopropyl phosphate + CO2 + NADH. It functions in the pathway cofactor biosynthesis; pyridoxine 5'-phosphate biosynthesis; pyridoxine 5'-phosphate from D-erythrose 4-phosphate: step 4/5. Its function is as follows. Catalyzes the NAD(P)-dependent oxidation of 4-(phosphooxy)-L-threonine (HTP) into 2-amino-3-oxo-4-(phosphooxy)butyric acid which spontaneously decarboxylates to form 3-amino-2-oxopropyl phosphate (AHAP). The polypeptide is 4-hydroxythreonine-4-phosphate dehydrogenase (Yersinia pestis bv. Antiqua (strain Angola)).